The following is a 194-amino-acid chain: Outer surface 22 kDa lipoprotein (194 aa).

Positions 1-21 (MYKNGFFKNYLSLLLIFLVIA) are cleaved as a signal peptide. The N-palmitoyl cysteine moiety is linked to residue Cys-22. The S-diacylglycerol cysteine moiety is linked to residue Cys-22.

It localises to the cell outer membrane. The chain is Outer surface 22 kDa lipoprotein (p22) from Borreliella burgdorferi (strain N40) (Borrelia burgdorferi).